A 257-amino-acid chain; its full sequence is DNA repair protein RecO (257 aa).

This sequence belongs to the RecO family.

Functionally, involved in DNA repair and RecF pathway recombination. The sequence is that of DNA repair protein RecO from Streptococcus thermophilus (strain CNRZ 1066).